We begin with the raw amino-acid sequence, 242 residues long: MSQILHPDAALVLFSGGQDSATCLAWALDRFARVETIGFDYGQRHLVELDSRAKLLDGLKTLKPEWVAKLGETHTLAIPTLAQVSDTALTRDVAIAMGADGLPNTFVPGRNLIFLTFAAALAYRRGIGAIIGGMCETDYSGYPDCRDATIKALGEAINLGMATQFELHTPLMWLDKAATWGLAQTLGGERLVDLIREHSHTCYLGERGARHDWGFGCGECPACQLRAKGWREFSAQRDARQG.

Residue F14 to L24 coordinates ATP. C202, C217, C220, and C223 together coordinate Zn(2+).

Belongs to the QueC family. It depends on Zn(2+) as a cofactor.

It carries out the reaction 7-carboxy-7-deazaguanine + NH4(+) + ATP = 7-cyano-7-deazaguanine + ADP + phosphate + H2O + H(+). Its pathway is purine metabolism; 7-cyano-7-deazaguanine biosynthesis. Catalyzes the ATP-dependent conversion of 7-carboxy-7-deazaguanine (CDG) to 7-cyano-7-deazaguanine (preQ(0)). The protein is 7-cyano-7-deazaguanine synthase of Rhodopseudomonas palustris (strain BisA53).